Reading from the N-terminus, the 495-residue chain is Probable cytosol aminopeptidase (495 aa).

Mn(2+) is bound by residues K266 and D271. K278 is an active-site residue. Mn(2+) contacts are provided by D289, D348, and E350. Residue R352 is part of the active site.

Belongs to the peptidase M17 family. Requires Mn(2+) as cofactor.

The protein resides in the cytoplasm. It catalyses the reaction Release of an N-terminal amino acid, Xaa-|-Yaa-, in which Xaa is preferably Leu, but may be other amino acids including Pro although not Arg or Lys, and Yaa may be Pro. Amino acid amides and methyl esters are also readily hydrolyzed, but rates on arylamides are exceedingly low.. The enzyme catalyses Release of an N-terminal amino acid, preferentially leucine, but not glutamic or aspartic acids.. Its function is as follows. Presumably involved in the processing and regular turnover of intracellular proteins. Catalyzes the removal of unsubstituted N-terminal amino acids from various peptides. The chain is Probable cytosol aminopeptidase from Pseudomonas aeruginosa (strain LESB58).